A 316-amino-acid polypeptide reads, in one-letter code: tRNA uridine(34) hydroxylase (316 aa).

Residues 136-230 form the Rhodanese domain; the sequence is ADENTVVVDK…YLEEVPREQS (95 aa). The active-site Cysteine persulfide intermediate is the Cys190.

The protein belongs to the TrhO family.

It catalyses the reaction uridine(34) in tRNA + AH2 + O2 = 5-hydroxyuridine(34) in tRNA + A + H2O. In terms of biological role, catalyzes oxygen-dependent 5-hydroxyuridine (ho5U) modification at position 34 in tRNAs. This Brucella abortus (strain 2308) protein is tRNA uridine(34) hydroxylase.